The following is a 123-amino-acid chain: MAKLTKAEFVSALKEMNIKEVMELIDGLKEEFGIDPTAVVAAAAAPAAEAAEEKTTFNVTLKSDGGNKLAVIKAVKDLLGLGLMDAKKLVESAPVLLKENVKKEEAEELKAKLTEAKAEITLD.

The protein belongs to the bacterial ribosomal protein bL12 family. In terms of assembly, homodimer. Part of the ribosomal stalk of the 50S ribosomal subunit. Forms a multimeric L10(L12)X complex, where L10 forms an elongated spine to which 2 to 4 L12 dimers bind in a sequential fashion. Binds GTP-bound translation factors.

Its function is as follows. Forms part of the ribosomal stalk which helps the ribosome interact with GTP-bound translation factors. Is thus essential for accurate translation. The chain is Large ribosomal subunit protein bL12 from Metamycoplasma arthritidis (strain 158L3-1) (Mycoplasma arthritidis).